The sequence spans 124 residues: CLAVATA3/ESR (CLE)-related protein 45 (124 aa).

The first 20 residues, 1–20 (MLGSSTRSMFFLLVCIGLLA), serve as a signal peptide directing secretion. N-linked (GlcNAc...) asparagine glycans are attached at residues Asn25 and Asn96. A coiled-coil region spans residues 71-109 (LNKNRRVLEEVNKDKIKAEETQERKNKTEDSFKSSKRRV). Residues 87–103 (KAEETQERKNKTEDSFK) show a composition bias toward basic and acidic residues. Residues 87–124 (KAEETQERKNKTEDSFKSSKRRVRRGSDPIHNKAQPFS) are disordered.

Belongs to the CLV3/ESR signal peptide family. Binds to SKM1 present in the pollen grain, particularly under relatively high temperature (at 30 degrees Celsius). Interacts with BAM3, especially in roots. Expressed at low levels in flowers, especially in pistils. Present in vascular tissues. In roots, confined to protophloem and sieve element precursor cells.

Its subcellular location is the secreted. The protein resides in the extracellular space. Its function is as follows. Extracellular signal peptide that regulates cell fate. Represses root apical meristem maintenance. Represses protophloem differentiation in a BAM3-dependent manner. BRX, BAM3, and CLE45 act together to regulate the transition of protophloem cells from proliferation to differentiation, thus impinging on postembryonic growth capacity of the root meristem; this signaling pathway requires CRN and CLV2 and involves MAKR5 for its transduction/amplification. Triggers the accumulation of MAKR5 in developing sieve elements in a BAM3-dependent manner. Prevents, in a dose-dependent manner, auxin response in the root meristem thus leading in the repression of protophloem differentiation and periclinal sieve element precursor cell division. Promotes pollen tube growth prolongation in a SKM1 and SKM2-dependent manner, especially under relatively high temperature (at 30 degrees Celsius), thus conferring tolerance against high temperature probably through the maintenance of mitochondrial activity. Alleviates mitochondrial decay pollen tube in vitro culture. The polypeptide is CLAVATA3/ESR (CLE)-related protein 45 (Arabidopsis thaliana (Mouse-ear cress)).